The following is a 352-amino-acid chain: Glycogen synthase kinase 3 (352 aa).

The 291-residue stretch at 20-310 folds into the Protein kinase domain; it reads YTVERVAGQG…PLDALCHPFF (291 aa). ATP is bound by residues 26–34 and Lys49; that span reads AGQGTFGTV. Catalysis depends on Asp152, which acts as the Proton acceptor.

The protein belongs to the protein kinase superfamily. CMGC Ser/Thr protein kinase family. GSK-3 subfamily. Inhibited by cyclin kinase 2 (CDK2) inhibitors, including GW8510.

The enzyme catalyses L-seryl-[tau protein] + ATP = O-phospho-L-seryl-[tau protein] + ADP + H(+). It carries out the reaction L-threonyl-[tau protein] + ATP = O-phospho-L-threonyl-[tau protein] + ADP + H(+). The chain is Glycogen synthase kinase 3 from Trypanosoma brucei brucei (strain 927/4 GUTat10.1).